We begin with the raw amino-acid sequence, 223 residues long: Arginine kinase (223 aa).

The Phosphagen kinase C-terminal domain occupies 56 to 222 (FVISTRVRLI…LELIKIEKEM (167 aa)). ATP is bound by residues 59–63 (STRVR) and His-68. An L-arginine-binding site is contributed by Cys-141. ATP is bound by residues 150-154 (RASVH) and 175-180 (RGTRGE). L-arginine is bound at residue Glu-180.

The protein belongs to the ATP:guanido phosphotransferase family.

It carries out the reaction L-arginine + ATP = N(omega)-phospho-L-arginine + ADP + H(+). This Chionoecetes opilio (Atlantic snow crab) protein is Arginine kinase.